A 707-amino-acid chain; its full sequence is Protein kinase C-like 1B (707 aa).

The region spanning 1–114 (MLFTGTVRVR…KIGSANDIWV (114 aa)) is the C2 domain. 2 consecutive Phorbol-ester/DAG-type zinc fingers follow at residues 170 to 220 (GHKF…VWKC) and 248 to 298 (PHRF…ANNC). Positions 323–368 (SKKKPSIMTDTSTDISGSSNSENSGYLQQISEDDSGTTSSRSASKV) are disordered. The span at 330 to 365 (MTDTSTDISGSSNSENSGYLQQISEDDSGTTSSRSA) shows a compositional bias: polar residues. The region spanning 378–638 (FTFMKVLGKG…EDAIRAHPFF (261 aa)) is the Protein kinase domain. ATP contacts are provided by residues 384-392 (LGKGSFGKV) and Lys407. Catalysis depends on Asp502, which acts as the Proton acceptor. The 69-residue stretch at 639 to 707 (REIDWDALES…FSFINPHFTY (69 aa)) folds into the AGC-kinase C-terminal domain.

Belongs to the protein kinase superfamily. AGC Ser/Thr protein kinase family. PKC subfamily. In terms of tissue distribution, expressed selectively in neurons that receive, transmit and process environmental signals.

It is found in the membrane. The protein localises to the cytoplasm. It localises to the cytoskeleton. The enzyme catalyses L-seryl-[protein] + ATP = O-phospho-L-seryl-[protein] + ADP + H(+). It carries out the reaction L-threonyl-[protein] + ATP = O-phospho-L-threonyl-[protein] + ADP + H(+). In terms of biological role, PKC is activated by diacylglycerol which in turn phosphorylates a range of cellular proteins. PKC also serves as the receptor for phorbol esters, a class of tumor promoters. Involved in neuropeptide secretion in motor axons. Likely to act via the extracellular signal-regulated kinase/mitogen-activated protein kinase (ERK/MAPK) pathway in the signaling response to various sensory neurons; temperature, odor, taste, and osmolality. Its role in regulation differs depending on the neuron in which it is acting; thermosensation in AFD neurons, osmolality in ASH neurons, olfactory perception in AWA and AWC neurons. Promotes dauer formation mediated by the insulin/IGF pathway. Required for resistance to antimitotic toxins. The polypeptide is Protein kinase C-like 1B (Caenorhabditis elegans).